Reading from the N-terminus, the 159-residue chain is MKLKIITVGKLKEKYLKEGVAEYQKRLNRFSKIETIELADEKTPDKASISENQRILDIEGERILSKIGERDYVIGLAIEGKQLPSESFSHLIDQKMISGYSTITFVIGGSLGLSQKVKKRADYLMSFGLLTLPHQLMKLVLMEQIYRAFMIRQGTPYHK.

S-adenosyl-L-methionine contacts are provided by residues Leu-76, Gly-108, and 127 to 132 (FGLLTL).

It belongs to the RNA methyltransferase RlmH family. Homodimer.

The protein resides in the cytoplasm. It catalyses the reaction pseudouridine(1915) in 23S rRNA + S-adenosyl-L-methionine = N(3)-methylpseudouridine(1915) in 23S rRNA + S-adenosyl-L-homocysteine + H(+). Functionally, specifically methylates the pseudouridine at position 1915 (m3Psi1915) in 23S rRNA. The chain is Ribosomal RNA large subunit methyltransferase H from Streptococcus agalactiae serotype Ia (strain ATCC 27591 / A909 / CDC SS700).